The chain runs to 170 residues: Phosphopantetheine adenylyltransferase (170 aa).

Position 10 (Thr-10) interacts with substrate. ATP contacts are provided by residues 10–11 (TF) and His-18. Lys-42, Leu-75, and Arg-89 together coordinate substrate. ATP-binding positions include 90–92 (GVR), Glu-100, and 125–131 (YTYVASS).

Belongs to the bacterial CoaD family. Homohexamer. It depends on Mg(2+) as a cofactor.

Its subcellular location is the cytoplasm. It catalyses the reaction (R)-4'-phosphopantetheine + ATP + H(+) = 3'-dephospho-CoA + diphosphate. It participates in cofactor biosynthesis; coenzyme A biosynthesis; CoA from (R)-pantothenate: step 4/5. Reversibly transfers an adenylyl group from ATP to 4'-phosphopantetheine, yielding dephospho-CoA (dPCoA) and pyrophosphate. The sequence is that of Phosphopantetheine adenylyltransferase from Chlorobium limicola (strain DSM 245 / NBRC 103803 / 6330).